The chain runs to 368 residues: MPPIKTAVLGTGVSAFVFHFPFLEALPSKFEIYACLERRATVTQSKARSAYPNILVYTNLDELLADVNIELVVVSLPPNVHSEIVKKALNAGKHVVCEKPFTPTYEEAKELYELAESKSLLLAIYQNRRWDGDFLTAKKIIESGRLGQVVEFESHFDRYRLGRKSGSWKDEPRPGNGMVYGIGSHLIDQAVSLFGTPYSVTAKLEAQRQIPPLEVEDYFRIILHYPAKGNKLPINVILSSTNVSCGCEMRFCIKGTRGSFMKFGFDPQESQLHSGMKPNDHGFGTDRFELYGNLWTVPLDADVKALPEPTKITVPTVQGNYRDFYDAVFEEILKKANEFPIKSDQVLAVEKIMEAAYKSSESSSSIQL.

It belongs to the Gfo/Idh/MocA family.

This is an uncharacterized protein from Schizosaccharomyces pombe (strain 972 / ATCC 24843) (Fission yeast).